The primary structure comprises 209 residues: Uracil phosphoribosyltransferase (209 aa).

Residues Arg-79, Arg-104, and 131–139 (DPMLATGNS) contribute to the 5-phospho-alpha-D-ribose 1-diphosphate site. Residues Ile-194 and 199 to 201 (GDA) each bind uracil. A 5-phospho-alpha-D-ribose 1-diphosphate-binding site is contributed by Asp-200.

It belongs to the UPRTase family. Mg(2+) is required as a cofactor.

It carries out the reaction UMP + diphosphate = 5-phospho-alpha-D-ribose 1-diphosphate + uracil. It functions in the pathway pyrimidine metabolism; UMP biosynthesis via salvage pathway; UMP from uracil: step 1/1. With respect to regulation, allosterically activated by GTP. Catalyzes the conversion of uracil and 5-phospho-alpha-D-ribose 1-diphosphate (PRPP) to UMP and diphosphate. The sequence is that of Uracil phosphoribosyltransferase from Polaromonas naphthalenivorans (strain CJ2).